The following is a 412-amino-acid chain: Multifunctional CCA protein (412 aa).

2 residues coordinate ATP: glycine 8 and arginine 11. CTP contacts are provided by glycine 8 and arginine 11. The Mg(2+) site is built by aspartate 21 and aspartate 23. 3 residues coordinate ATP: arginine 91, arginine 137, and arginine 140. Arginine 91, arginine 137, and arginine 140 together coordinate CTP. One can recognise an HD domain in the interval 228–329; that stretch reads TGIHTLMTLS…VKLFDSIDAW (102 aa).

The protein belongs to the tRNA nucleotidyltransferase/poly(A) polymerase family. Bacterial CCA-adding enzyme type 1 subfamily. In terms of assembly, monomer. Can also form homodimers and oligomers. Requires Mg(2+) as cofactor. It depends on Ni(2+) as a cofactor.

It catalyses the reaction a tRNA precursor + 2 CTP + ATP = a tRNA with a 3' CCA end + 3 diphosphate. The enzyme catalyses a tRNA with a 3' CCA end + 2 CTP + ATP = a tRNA with a 3' CCACCA end + 3 diphosphate. In terms of biological role, catalyzes the addition and repair of the essential 3'-terminal CCA sequence in tRNAs without using a nucleic acid template. Adds these three nucleotides in the order of C, C, and A to the tRNA nucleotide-73, using CTP and ATP as substrates and producing inorganic pyrophosphate. tRNA 3'-terminal CCA addition is required both for tRNA processing and repair. Also involved in tRNA surveillance by mediating tandem CCA addition to generate a CCACCA at the 3' terminus of unstable tRNAs. While stable tRNAs receive only 3'-terminal CCA, unstable tRNAs are marked with CCACCA and rapidly degraded. This chain is Multifunctional CCA protein, found in Escherichia coli (strain K12 / MC4100 / BW2952).